A 102-amino-acid chain; its full sequence is Small ribosomal subunit protein uS10 (102 aa).

This sequence belongs to the universal ribosomal protein uS10 family. Part of the 30S ribosomal subunit.

Functionally, involved in the binding of tRNA to the ribosomes. The protein is Small ribosomal subunit protein uS10 of Pyrococcus horikoshii (strain ATCC 700860 / DSM 12428 / JCM 9974 / NBRC 100139 / OT-3).